Here is a 263-residue protein sequence, read N- to C-terminus: MRLGLCVVALVLSWTHLTISSRGIKGKRQRRISAEGSQACAKGCELCSEVNGCLKCSPKLFILLERNDIRQVGVCLPSCPPGYFDARNPDMNKCIKCKIEHCEACFSHNFCTKCKEGLYLHKGRCYPACPEGSSAANGTMECSSPAQCEMSEWSPWGPCSKKQQLCGFRRGSEERTRRVLHAPVGDHAACSDTKETRRCTVRRVPCPEGQKRRKGGQGRRENANRNLARKESKEAGAGSRRRKGQQQQQQQGTVGPLTSAGPA.

Positions 1–20 (MRLGLCVVALVLSWTHLTIS) are cleaved as a signal peptide. 2 FU repeats span residues 34 to 85 (AEGS…GYFD) and 91 to 135 (MNKC…GSSA). 11 cysteine pairs are disulfide-bonded: C40-C47, C44-C53, C56-C75, C79-C94, C97-C105, C102-C111, C114-C125, C129-C142, C148-C190, C159-C166, and C199-C206. An N-linked (GlcNAc...) asparagine glycan is attached at N137. The region spanning 147–207 (QCEMSEWSPW…RCTVRRVPCP (61 aa)) is the TSP type-1 domain. 2 C-linked (Man) tryptophan glycosylation sites follow: W153 and W156. Positions 206 to 263 (CPEGQKRRKGGQGRRENANRNLARKESKEAGAGSRRRKGQQQQQQQGTVGPLTSAGPA) are disordered. Basic and acidic residues predominate over residues 218 to 234 (GRRENANRNLARKESKE).

Belongs to the R-spondin family. As to quaternary structure, interacts with the extracellular domain of FZD8 and LRP6. It however does not form a ternary complex with FZD8 and LRP6. Interacts with WNT1. Binds heparin. Interacts with ZNRF3; promoting indirect interaction between ZNRF3 and LGR4 and membrane clearance of ZNRF3. Interacts with LGR4, LGR5 and LGR6. Identified in a complex composed of RNF43, LGR5 and RSPO1. Interacts (via FU repeats) with KREM1. Post-translationally, C-, and N-glycosylated. N-glycosylation at Asn-137, negatively influences its secretion and enhancing effect on Wnt/beta-catenin signaling. C-mannosylation at Trp-156 by DPY19L3 is required for its secretion and regulates the enhancing activity of Wnt signaling. Abundantly expressed in adrenal glands, ovary, testis, thyroid and trachea but not in bone marrow, spinal cord, stomach, leukocytes colon, small intestine, prostate, thymus and spleen.

It localises to the secreted. It is found in the nucleus. Functionally, activator of the canonical Wnt signaling pathway by acting as a ligand for LGR4-6 receptors. Upon binding to LGR4-6 (LGR4, LGR5 or LGR6), LGR4-6 associate with phosphorylated LRP6 and frizzled receptors that are activated by extracellular Wnt receptors, triggering the canonical Wnt signaling pathway to increase expression of target genes. Also regulates the canonical Wnt/beta-catenin-dependent pathway and non-canonical Wnt signaling by acting as an inhibitor of ZNRF3, an important regulator of the Wnt signaling pathway. Acts as a ligand for frizzled FZD8 and LRP6. May negatively regulate the TGF-beta pathway. Has a essential roles in ovary determination. Regulates Wnt signaling by antagonizing DKK1/KREM1-mediated internalization of LRP6 through an interaction with KREM1. The protein is R-spondin-1 (RSPO1) of Homo sapiens (Human).